The chain runs to 281 residues: Sulfur carrier protein FdhD (281 aa).

The Cysteine persulfide intermediate role is filled by cysteine 117.

The protein belongs to the FdhD family.

The protein localises to the cytoplasm. Functionally, required for formate dehydrogenase (FDH) activity. Acts as a sulfur carrier protein that transfers sulfur from IscS to the molybdenum cofactor prior to its insertion into FDH. In Xanthomonas oryzae pv. oryzae (strain MAFF 311018), this protein is Sulfur carrier protein FdhD.